A 1316-amino-acid polypeptide reads, in one-letter code: Tetratricopeptide repeat protein 21B (1316 aa).

TPR repeat units lie at residues 108–141 (EKALYHAGLFLWHIGRHDKAREYIDRMIKISDGS), 145–178 (HVLKAWLDITRGKEPYTKKALKYFEEGLQDGNDT), 180–211 (ALLGKAQCLEMRQNYSGALETVNQIIVNFPSF), 285–323 (AQLFYNITLAFSRTCGRSQLILQKIQTLLERAFSLNPQQ), 324–357 (SEFATELGYQMILQGRVKEALKWYKTAMTLDETS), 492–525 (LQTVFLIAKVKYLSGDIEAAFNNLQHCLEHNPSY), 563–596 (PLYHLIKAQSQKKMGEIADAIKTLHMAMSLPGMK), 617–650 (LSIFLELIDVHRLNGEQHEATKVLQDAIHEFSGT), 722–755 (PRSFLLLGDAYMNILEPEEAIVAYEQALNQNPKD), 757–789 (TLASKMGKALIKTHNYSMAITYYEAALKTGQKN), 791–822 (LCYDLAELLLKLKWYDKAEKVLQHALAHEPVN), 831–864 (GRCQVLLAKVYSKMEKLGDAITALQQARELQARV), 884–917 (AEICAEIAKHSVAQRDYEKAIKFYREALVHCETD), 919–951 (KIMLELARLYLAQDDPDSCLRQCALLLQSDQDN), 952–985 (EAATMMMADLMFRKQDYEQAVFHLQQLLERKPDN), 1023–1056 (PGFQYCKGLYLWYTGEPNDALRHFNKARKDRDWG), 1197–1230 (EKSWLLLADIYIQSAKYDMAEDLLKRCLRHNRSC), 1232–1264 (KAYEYMGYIMEKEQAYTDAALNYEMAWKYSNRT), and 1266–1299 (PAVGYKLAFNYLKAKRYVDSIDICHQVLEAHPTY).

Belongs to the TTC21 family. Component of the IFT complex A (IFT-A) complex. IFT-A complex is divided into a core subcomplex composed of IFT122:IFT140:WDR19 which is associated with TULP3 and a peripheral subcomplex composed of IFT43:WDR35:TTC21B. Interacts directy with WDR35 and TTC21B. Interacts with TTC25.

It localises to the cytoplasm. It is found in the cytoskeleton. Its subcellular location is the cilium axoneme. Its function is as follows. Component of the IFT complex A (IFT-A), a complex required for retrograde ciliary transport and entry into cilia of G protein-coupled receptors (GPCRs). Essential for retrograde trafficking of IFT-1, IFT-B and GPCRs. Negatively modulates the SHH signal transduction. The protein is Tetratricopeptide repeat protein 21B of Homo sapiens (Human).